The sequence spans 511 residues: Bifunctional purine biosynthesis protein PurH (511 aa).

An MGS-like domain is found at 1 to 146 (MTKRALVSVS…KNHADVTVVV (146 aa)).

It belongs to the PurH family.

The catalysed reaction is (6R)-10-formyltetrahydrofolate + 5-amino-1-(5-phospho-beta-D-ribosyl)imidazole-4-carboxamide = 5-formamido-1-(5-phospho-D-ribosyl)imidazole-4-carboxamide + (6S)-5,6,7,8-tetrahydrofolate. It carries out the reaction IMP + H2O = 5-formamido-1-(5-phospho-D-ribosyl)imidazole-4-carboxamide. It participates in purine metabolism; IMP biosynthesis via de novo pathway; 5-formamido-1-(5-phospho-D-ribosyl)imidazole-4-carboxamide from 5-amino-1-(5-phospho-D-ribosyl)imidazole-4-carboxamide (10-formyl THF route): step 1/1. The protein operates within purine metabolism; IMP biosynthesis via de novo pathway; IMP from 5-formamido-1-(5-phospho-D-ribosyl)imidazole-4-carboxamide: step 1/1. The chain is Bifunctional purine biosynthesis protein PurH from Shouchella clausii (strain KSM-K16) (Alkalihalobacillus clausii).